Here is a 411-residue protein sequence, read N- to C-terminus: Allantoate amidohydrolase (411 aa).

4 residues coordinate Zn(2+): H81, D92, E127, and H190. Residues R215, N275, and R288 each coordinate allantoate. H382 is a Zn(2+) binding site.

This sequence belongs to the peptidase M20 family. Homodimer. The cofactor is Zn(2+).

The protein localises to the cytoplasm. It carries out the reaction allantoate + H2O + 2 H(+) = (S)-2-ureidoglycine + NH4(+) + CO2. It functions in the pathway nitrogen metabolism; (S)-allantoin degradation. With respect to regulation, sulfate could be an allosteric effector of the enzyme that is responsible for stabilizing substrate binding. In addition, this anion effector may act as a counterion during enzyme-mediated catalysis. Functionally, involved in the anaerobic nitrogen utilization via the assimilation of allantoin. Catalyzes specifically the hydrolysis of allantoate to yield CO2, NH3 and S-ureidoglycine, which is unstable and readily undergoes a second deamination by S-ureidoglycine aminohydrolase AllE to yield S-ureidoglycolate and NH3. In vivo, the spontaneous release of S-ureidoglycolate and ammonia from S-ureidoglycine appears to be too slow to sustain an efficient flux of nitrogen. The sequence is that of Allantoate amidohydrolase from Escherichia coli (strain K12).